The primary structure comprises 323 residues: Mortality factor 4-like protein 1 (323 aa).

The region spanning 12-62 (QEGERVLCFHGPLLYEAKCVKVAIKDKQVKYFIHYSGWNKNWDEWVPESRV) is the Tudor-knot domain. The tract at residues 77–143 (QKANQEQYAE…RKKRARVDPT (67 aa)) is disordered. Residues 94 to 227 (PGKKTSGLQQ…VAGIKEYFNV (134 aa)) form a sufficient for interaction with SIN3A region. At Lys104 the chain carries N6-acetyllysine. Residues 125–191 (STSETPQPPR…FYLPAKKNVD (67 aa)) form an interaction with RB1-1 region. The tract at residues 149–303 (TFMNRVEVKV…FLKYLAKNSA (155 aa)) is sufficient for interaction with PHF12. Residues 152-323 (NRVEVKVKIP…APPEYHRKAV (172 aa)) enclose the MRG domain. The segment at 284–305 (LALLLNYLHDFLKYLAKNSATL) is interaction with RB1-2.

As to quaternary structure, component of the NuA4 histone acetyltransferase complex which contains the catalytic subunit KAT5/TIP60 and the subunits EP400, TRRAP/PAF400, BRD8/SMAP, EPC1, DMAP1/DNMAP1, RUVBL1/TIP49, RUVBL2, ING3, actin, ACTL6A/BAF53A, MORF4L1/MRG15, MORF4L2/MRGX, MRGBP, YEATS4/GAS41, VPS72/YL1 and MEAF6. The NuA4 complex interacts with MYC and the adenovirus E1A protein. MORF4L1 may also participate in the formation of NuA4 related complexes which lack the KAT5/TIP60 catalytic subunit, but which include the SWI/SNF related protein SRCAP. Component of the mSin3A histone deacetylase complex, which includes SIN3A, HDAC2, ARID4B, MORF4L1, RBBP4/RbAp48, and RBBP7/RbAp46. May also interact with PHF12 and one or more as yet undefined members of the TLE (transducin-like enhancer of split) family of transcriptional repressors. Component of the SIN3B complex, which includes SIN3B, HDAC2 or HDAC1, PHF12 and MORF4L1. Interacts with RB1 and KAT8. Interacts with the N-terminus of MRFAP1. Found in a complex composed of MORF4L1, MRFAP1 and RB1. Interacts with the entire BRCA complex, which contains BRCA1, PALB2, BRCA2 and RAD51. Interacts with PALB2. Forms a complex with MSL1 and NUPR1.

The protein localises to the nucleus. Functionally, component of the NuA4 histone acetyltransferase (HAT) complex which is involved in transcriptional activation of select genes principally by acetylation of nucleosomal histones H4 and H2A. This modification may both alter nucleosome - DNA interactions and promote interaction of the modified histones with other proteins which positively regulate transcription. This complex may be required for the activation of transcriptional programs associated with oncogene and proto-oncogene mediated growth induction, tumor suppressor mediated growth arrest and replicative senescence, apoptosis, and DNA repair. The NuA4 complex ATPase and helicase activities seem to be, at least in part, contributed by the association of RUVBL1 and RUVBL2 with EP400. NuA4 may also play a direct role in DNA repair when directly recruited to sites of DNA damage. As part of the SIN3B complex represses transcription and counteracts the histone acetyltransferase activity of EP300 through the recognition H3K27ac marks by PHF12 and the activity of the histone deacetylase HDAC2. SIN3B complex is recruited downstream of the constitutively active genes transcriptional start sites through interaction with histones and mitigates histone acetylation and RNA polymerase II progression within transcribed regions contributing to the regulation of transcription. Required for homologous recombination repair (HRR) and resistance to mitomycin C (MMC). Involved in the localization of PALB2, BRCA2 and RAD51, but not BRCA1, to DNA-damage foci. This chain is Mortality factor 4-like protein 1 (Morf4l1), found in Rattus norvegicus (Rat).